A 552-amino-acid polypeptide reads, in one-letter code: Arginine--tRNA ligase (552 aa).

The 'HIGH' region signature appears at 130–140 (ANPTGPLSIGH).

The protein belongs to the class-I aminoacyl-tRNA synthetase family. As to quaternary structure, monomer.

The protein localises to the cytoplasm. It carries out the reaction tRNA(Arg) + L-arginine + ATP = L-arginyl-tRNA(Arg) + AMP + diphosphate. In Desulfotalea psychrophila (strain LSv54 / DSM 12343), this protein is Arginine--tRNA ligase.